The following is a 479-amino-acid chain: Ribosomal RNA small subunit methyltransferase F (479 aa).

S-adenosyl-L-methionine contacts are provided by residues 125 to 131 (AAAPGSK), Glu149, Gly177, and Asp194. Cys247 serves as the catalytic Nucleophile.

This sequence belongs to the class I-like SAM-binding methyltransferase superfamily. RsmB/NOP family.

It is found in the cytoplasm. It carries out the reaction cytidine(1407) in 16S rRNA + S-adenosyl-L-methionine = 5-methylcytidine(1407) in 16S rRNA + S-adenosyl-L-homocysteine + H(+). In terms of biological role, specifically methylates the cytosine at position 1407 (m5C1407) of 16S rRNA. In Shigella flexneri serotype 5b (strain 8401), this protein is Ribosomal RNA small subunit methyltransferase F.